Here is a 336-residue protein sequence, read N- to C-terminus: MTLKIGVIGTGAIGQDHTRRINQVLAGARVAALNDVNRANAEACQRDHAPEARIFDDPHALIRDAEVDAILVCSWGQTHEEYVLAAIAAGKPCFCEKPLATTAEGARRIVEAEEAAGKRLVQVGFMRRYDPGYVALKKAVAEVTGAPLMVHAAHRNPRVGENYLTPMAIHDTLIHEIDVLRWLLDDDYVGARVLFPRKSPRAHEKLRDPQVVVLETARGVVIDVEVFVNCHYGYDIQCEIVGEDGIARLPEPMGIQTRSGAVLGQPILMDWKDRFIDSYDYELADFLKAAARGTAAGPTAWDGYVAAVTADACVAAQEAGGESVAIELPARPALYA.

The protein belongs to the Gfo/Idh/MocA family. In terms of assembly, homotetramer.

The catalysed reaction is myo-inositol + NAD(+) = scyllo-inosose + NADH + H(+). Functionally, involved in the oxidation of myo-inositol (MI) to 2-keto-myo-inositol (2KMI or 2-inosose). The chain is Inositol 2-dehydrogenase from Paracoccus denitrificans (strain Pd 1222).